We begin with the raw amino-acid sequence, 225 residues long: Methylthioribulose-1-phosphate dehydratase (225 aa).

Zn(2+) is bound by residues H106 and H108.

It belongs to the aldolase class II family. MtnB subfamily. Zn(2+) is required as a cofactor.

The enzyme catalyses 5-(methylsulfanyl)-D-ribulose 1-phosphate = 5-methylsulfanyl-2,3-dioxopentyl phosphate + H2O. The protein operates within amino-acid biosynthesis; L-methionine biosynthesis via salvage pathway; L-methionine from S-methyl-5-thio-alpha-D-ribose 1-phosphate: step 2/6. Functionally, catalyzes the dehydration of methylthioribulose-1-phosphate (MTRu-1-P) into 2,3-diketo-5-methylthiopentyl-1-phosphate (DK-MTP-1-P). In Xanthomonas oryzae pv. oryzae (strain PXO99A), this protein is Methylthioribulose-1-phosphate dehydratase.